The chain runs to 371 residues: Cytochrome b (371 aa).

4 helical membrane passes run 25-45 (FGSM…FLAI), 69-90 (WMMQ…YIHI), 105-125 (WMSG…GYVL), and 170-190 (FFAL…LHII). 2 residues coordinate heme b: His75 and His89. Residues His174 and His188 each contribute to the heme b site. His193 is a binding site for a ubiquinone. 4 helical membrane-spanning segments follow: residues 218–238 (HKDL…VSFL), 280–300 (LGGA…PFTH), 312–332 (LSQL…WAAT), and 339–358 (FIII…LSTP).

The protein belongs to the cytochrome b family. In terms of assembly, the cytochrome bc1 complex contains 3 respiratory subunits (MT-CYB, CYC1 and UQCRFS1), 2 core proteins (UQCRC1 and UQCRC2) and probably 6 low-molecular weight proteins. The cofactor is heme b.

It localises to the mitochondrion inner membrane. In terms of biological role, component of the ubiquinol-cytochrome c reductase complex (complex III or cytochrome b-c1 complex) that is part of the mitochondrial respiratory chain. The b-c1 complex mediates electron transfer from ubiquinol to cytochrome c. Contributes to the generation of a proton gradient across the mitochondrial membrane that is then used for ATP synthesis. In Antaresia maculosa (Eastern small blotched python), this protein is Cytochrome b (MT-CYB).